The primary structure comprises 132 residues: Small ribosomal subunit protein uS9 (132 aa).

It belongs to the universal ribosomal protein uS9 family.

In Blochmanniella pennsylvanica (strain BPEN), this protein is Small ribosomal subunit protein uS9.